Reading from the N-terminus, the 204-residue chain is tRNA (pseudouridine(54)-N(1))-methyltransferase (204 aa).

Positions 136 and 158 each coordinate S-adenosyl-L-methionine.

Belongs to the methyltransferase superfamily. TrmY family. In terms of assembly, homodimer.

Its subcellular location is the cytoplasm. The enzyme catalyses pseudouridine(54) in tRNA + S-adenosyl-L-methionine = N(1)-methylpseudouridine(54) in tRNA + S-adenosyl-L-homocysteine + H(+). In terms of biological role, specifically catalyzes the N1-methylation of pseudouridine at position 54 (Psi54) in tRNAs. In Pyrococcus abyssi (strain GE5 / Orsay), this protein is tRNA (pseudouridine(54)-N(1))-methyltransferase.